Reading from the N-terminus, the 335-residue chain is Corrinoid adenosyltransferase PduO (335 aa).

Position 206 (His206) interacts with heme.

The protein belongs to the Cob(I)alamin adenosyltransferase family. PduO subfamily. Forms a complex with PduS. Heme b serves as cofactor. The cofactor is Mg(2+).

The protein localises to the bacterial microcompartment. The catalysed reaction is cob(I)alamin-[corrinoid adenosyltransferase] + ATP = apo-[corrinoid adenosyltransferase] + adenosylcob(III)alamin + triphosphate. It functions in the pathway polyol metabolism; 1,2-propanediol degradation. It participates in cofactor biosynthesis; adenosylcobalamin biosynthesis. In terms of biological role, converts cob(I)alamin to adenosylcobalamin (adenosylcob(III)alamin), the cofactor for propanediol dehydratase. Found in the bacterial microcompartment (BMC) dedicated to 1,2-propanediol (1,2-PD) degradation. PduS and PduO allow regeneration of the adenosylcobalamin cofactor within the BMC. Expression of a cosmid containing the full 21-gene pdu operon in E.coli allows E.coli to grow on 1,2-propanediol (1,2-PD) with the appearance of bacterial microcompartments (BMC) in its cytoplasm. Functionally, the 1,2-PD-specific bacterial microcompartment (BMC) concentrates low levels of 1,2-PD catabolic enzymes, concentrates volatile reaction intermediates thus enhancing pathway flux and keeps the level of toxic, mutagenic propionaldehyde low. This chain is Corrinoid adenosyltransferase PduO, found in Citrobacter freundii.